Reading from the N-terminus, the 154-residue chain is tRNA-splicing endonuclease (154 aa).

Residues Y86, H102, and K133 contribute to the active site.

The protein belongs to the tRNA-intron endonuclease family. Archaeal short subfamily. Homotetramer; although the tetramer contains four active sites, only two participate in the cleavage. Therefore, it should be considered as a dimer of dimers.

The catalysed reaction is pretRNA = a 3'-half-tRNA molecule with a 5'-OH end + a 5'-half-tRNA molecule with a 2',3'-cyclic phosphate end + an intron with a 2',3'-cyclic phosphate and a 5'-hydroxyl terminus.. In terms of biological role, endonuclease that removes tRNA introns. Cleaves pre-tRNA at the 5'- and 3'-splice sites to release the intron. The products are an intron and two tRNA half-molecules bearing 2',3' cyclic phosphate and 5'-OH termini. Recognizes a pseudosymmetric substrate in which 2 bulged loops of 3 bases are separated by a stem of 4 bp. In Nanoarchaeum equitans (strain Kin4-M), this protein is tRNA-splicing endonuclease.